The primary structure comprises 82 residues: uncharacterized protein (82 aa).

This is an uncharacterized protein from Pigeon circovirus (PiCV).